The chain runs to 311 residues: Ribonuclease HIII (311 aa).

In terms of domain architecture, RNase H type-2 spans 95–311 (MSIVGSDEVG…NTEKALRLLR (217 aa)). Positions 101, 102, and 206 each coordinate a divalent metal cation.

The protein belongs to the RNase HII family. RnhC subfamily. Requires Mn(2+) as cofactor. It depends on Mg(2+) as a cofactor.

The protein localises to the cytoplasm. It catalyses the reaction Endonucleolytic cleavage to 5'-phosphomonoester.. Functionally, endonuclease that specifically degrades the RNA of RNA-DNA hybrids. The sequence is that of Ribonuclease HIII from Bacillus cereus (strain ATCC 14579 / DSM 31 / CCUG 7414 / JCM 2152 / NBRC 15305 / NCIMB 9373 / NCTC 2599 / NRRL B-3711).